We begin with the raw amino-acid sequence, 449 residues long: Hyaluronidase-1 (449 aa).

The first 39 residues, 1 to 39 (MKPFSPEVSPDPCPATAAHLLRTYTLFLTLLELAQGCRG), serve as a signal peptide directing secretion. Cystine bridges form between cysteine 58-cysteine 348 and cysteine 222-cysteine 236. 2 N-linked (GlcNAc...) asparagine glycosylation sites follow: asparagine 85 and asparagine 114. The active-site Proton donor is the glutamate 146. N-linked (GlcNAc...) asparagine glycans are attached at residues asparagine 231, asparagine 252, and asparagine 365. Intrachain disulfides connect cysteine 373–cysteine 384, cysteine 378–cysteine 433, and cysteine 435–cysteine 444. Residues 433 to 444 (CRCYRGWSGEWC) form the EGF-like domain.

The protein belongs to the glycosyl hydrolase 56 family.

The protein localises to the secreted. It is found in the lysosome. The enzyme catalyses Random hydrolysis of (1-&gt;4)-linkages between N-acetyl-beta-D-glucosamine and D-glucuronate residues in hyaluronate.. Its function is as follows. May have a role in promoting tumor progression. May block the TGFB1-enhanced cell growth. Overexpression of HYAL1 suppressed the growth rate of colon carcinoma cell tumors in an experimental model. The chain is Hyaluronidase-1 (Hyal1) from Rattus norvegicus (Rat).